Here is a 144-residue protein sequence, read N- to C-terminus: Large ribosomal subunit protein uL15 (144 aa).

Residues 1-59 are disordered; sequence MHLNTLAPAPGAKKSSKRVGRGMGSGLGKTGGRGHKGQKSRSGGSVKPGFEGGQMPIQR. A compositionally biased stretch (gly residues) spans 21–31; the sequence is RGMGSGLGKTG.

This sequence belongs to the universal ribosomal protein uL15 family. As to quaternary structure, part of the 50S ribosomal subunit.

Binds to the 23S rRNA. This Pseudoalteromonas atlantica (strain T6c / ATCC BAA-1087) protein is Large ribosomal subunit protein uL15.